A 399-amino-acid polypeptide reads, in one-letter code: Cytochrome P450 FAS1 (399 aa).

Cys349 is a heme binding site.

It belongs to the cytochrome P450 family. Heme serves as cofactor.

It is found in the cytoplasm. Its function is as follows. May be involved in the biosynthesis of cytokinin phytohormones and in host plant fasciation (leafy gall). This chain is Cytochrome P450 FAS1 (fas1), found in Rhodococcoides fascians (Rhodococcus fascians).